We begin with the raw amino-acid sequence, 167 residues long: Male-specific protein scotti (167 aa).

N-linked (GlcNAc...) asparagine glycosylation is found at asparagine 30, asparagine 124, and asparagine 148.

This sequence belongs to the male-specific scotti family.

Post-meiotically transcribed gene that has a role in late spermiogenesis; required for actin cone progression during spermatid individualization. The sequence is that of Male-specific protein scotti from Drosophila ananassae (Fruit fly).